A 359-amino-acid chain; its full sequence is GalNAc-alpha-(1-&gt;4)-GalNAc-alpha-(1-&gt;3)-diNAcBac-PP-undecaprenol alpha-1,4-N-acetyl-D-galactosaminyltransferase (359 aa).

Glutamate 17 provides a ligand contact to substrate. Tyrosine 45 contacts UDP-N-acetyl-alpha-D-galactosamine. 71-74 (RFKK) provides a ligand contact to substrate. UDP-N-acetyl-alpha-D-galactosamine-binding positions include histidine 117, arginine 190, lysine 195, valine 246, and 266–274 (EGLPTVLIE). Arginine 190 provides a ligand contact to substrate.

It belongs to the glycosyltransferase group 1 family.

It is found in the cell inner membrane. It carries out the reaction N-acetyl-alpha-D-galactosaminyl-(1-&gt;4)-N-acetyl-alpha-D-galactosaminyl-(1-&gt;3)-N,N'-diacetyl-alpha-D-bacillosaminyl-tri-trans,heptacis-undecaprenyl diphosphate + 3 UDP-N-acetyl-alpha-D-galactosamine = [alpha-D-GalNAc-(1-&gt;4)]4-alpha-D-GalNAc-(1-&gt;3)-alpha-D-diNAcBac-tri-trans,hepta-cis-undecaprenyl diphosphate + 3 UDP + 3 H(+). Its pathway is protein modification; protein glycosylation. Processive glycosyltransferase that is part of the biosynthetic pathway of the lipid-linked oligosaccharide (LLO) that serves as the glycan donor in bacterial protein N-glycosylation. Catalyzes the transfer of exactly three alpha-(1-&gt;4)-N-acetylgalactosamine (GalNAc) units to the growing LLO precursor, GalNAc-alpha-(1-&gt;4)-GalNAc-alpha-(1-&gt;3)-diNAcBac-PP-undecaprenyl. Cannot accept UDP-GlcNAc as substrate. In Campylobacter jejuni subsp. jejuni serotype O:2 (strain ATCC 700819 / NCTC 11168), this protein is GalNAc-alpha-(1-&gt;4)-GalNAc-alpha-(1-&gt;3)-diNAcBac-PP-undecaprenol alpha-1,4-N-acetyl-D-galactosaminyltransferase.